Reading from the N-terminus, the 427-residue chain is MKLIARLMSMCAVLFFAINSAYADDEVRIVIDEGVEGARPIAVVPFKSNGSVPADIAEIITADLRNSGKFNPIPVNQMPQQPGSASEVTPDAWASLGIDAVVVGQVTASGNGYQIAYQLVDTVGASGNAGAVLAQNSLTVQPKWIRWGAHQVSDEVFEKMTGIKGAFRTRIAYVVQRNAGSHELRIADYDGFNQFVVTRSSQPIMSPAWSPDGQRLAYVSFENRKSQLVVHNLGSGQRKVVAAFRGHNGAPAFSPDGSRLAFANNQDGLLNIYVMNSNGGHPTKLTGGAGNNTEPSWTQDGRILFTSDRSGSPQVYSMSSSGGGATLIGGGRSYSGQMSSDGKTLVMISGDNVVKYDTTTGTSEVLSSTFLDESPSISPNGIMIIYSSTQGLGKVLQLVSADGRFKARLPGSDGQVKFPAWSPYLTK.

The N-terminal stretch at 1 to 23 (MKLIARLMSMCAVLFFAINSAYA) is a signal peptide.

Belongs to the TolB family. In terms of assembly, the Tol-Pal system is composed of five core proteins: the inner membrane proteins TolA, TolQ and TolR, the periplasmic protein TolB and the outer membrane protein Pal. They form a network linking the inner and outer membranes and the peptidoglycan layer.

The protein localises to the periplasm. In terms of biological role, part of the Tol-Pal system, which plays a role in outer membrane invagination during cell division and is important for maintaining outer membrane integrity. This Actinobacillus succinogenes (strain ATCC 55618 / DSM 22257 / CCUG 43843 / 130Z) protein is Tol-Pal system protein TolB.